The sequence spans 699 residues: UV radiation resistance-associated gene protein (699 aa).

Positions 1–10 (MSASASVGGP) are enriched in low complexity. The segment at 1 to 24 (MSASASVGGPVPQPPPGPAAALPP) is disordered. The region spanning 23–149 (PPGSAARALH…YLGQQIHARN (127 aa)) is the C2 domain. A sufficient for interaction with STX7; VTI1B AND STX8 region spans residues 200 to 269 (HRAQCAIKQT…REVALLHKQQ (70 aa)). Residues 224-305 (LRLTSTSNEL…LRKECTAKRE (82 aa)) are a coiled coil. A sufficient for interaction with VPS16, required for interaction with CEP63 region spans residues 270–442 (IALQDKGSAF…IAQLRYQHGL (173 aa)). The required for interaction with PRKDC, XRCC6 and XRCC5 stretch occupies residues 443-699 (GTPDLRQTLP…FRRPRRSSDK (257 aa)). The interval 486–591 (GGADVGFSGG…SQEQGEALSG (106 aa)) is disordered. A Phosphoserine modification is found at S493. At S498 the chain carries Phosphoserine; by MTOR. At S508 the chain carries Phosphoserine. Residue T518 is modified to Phosphothreonine. S522 bears the Phosphoserine mark. Residues 523 to 535 (YNSALAQPVTTVP) show a composition bias toward polar residues. A compositionally biased stretch (low complexity) spans 545 to 556 (TSLSSSLDTSLD). A phosphoserine mark is found at S549 and S550. Over residues 557 to 567 (FSKENKKKGED) the composition is skewed to basic and acidic residues. Residues S571, S582, and S689 each carry the phosphoserine modification.

As to quaternary structure, component of the PI3K (PI3KC3/PI3K-III/class III phosphatidylinositol 3-kinase) complex II (PI3KC3-C2) in which the core composed of the catalytic subunit PIK3C3, the regulatory subunit PIK3R4 and BECN1 is associated with UVRAG; in the complex interacts directly with BECN1. PI3KC3-C2 can associate with further regulatory subunits such as RUBCN and probably SH3GLB1/Bif-1. Interacts with SH3GLB1; UVRAG bridges the interaction to BECN1 indicative for an association with the PI3K complex PI3KC3-C2. Interacts with RINT1. Associates with the NRZ complex under basal conditions and dissociates from it under autophagy conditions to associate with the PI3K complex; these complex associations seem to be mutually exclusive. Interacts with VPS16; VPS11; VPS18; VPS33 (VPS33A or VPS33B) and VPS39; indicative for an association with a class C Vps tethering complex (possibly the HOPS complex). Interacts with RAB7A; RAB7A competes with UVRAG for RUBCN binding. Interacts with STX7, VTI1B, STX8. Interacts with PRKDC, XRCC6 and XRCC5; indicative for an association with the DNA-dependent protein kinase complex DNA-PK. Interacts with CEP63. Directly interacts with FEZ1 and SCOC; the interaction with SCOC is reduced by amino acid starvation, but the complex is stabilized in the presence of FEZ1. Interacts with BECN1P1/BECN2. Interacts with SLAMF1. Interacts with RUBCNL/PACER; promoting targeting of UVRAG to autophagosome. Interacts with WNK1. Post-translationally, phosphorylated at Ser-498 by MTOR under basal conditions; increases the interaction with RUBCN implicated in inhibitory effect of RUBCN on PI3KC3 and decreases interaction with RAB7,A and VPS16 and VPS39 (indicative for a class C Vps complex, possibly the HOPS complex). In terms of tissue distribution, highly expressed in brain, lung, kidney and liver.

It is found in the late endosome. The protein resides in the lysosome. Its subcellular location is the cytoplasmic vesicle. The protein localises to the autophagosome. It localises to the early endosome. It is found in the endoplasmic reticulum. The protein resides in the midbody. Its subcellular location is the chromosome. The protein localises to the centromere. In terms of biological role, versatile protein that is involved in regulation of different cellular pathways implicated in membrane trafficking. Involved in regulation of the COPI-dependent retrograde transport from Golgi and the endoplasmic reticulum by associating with the NRZ complex; the function is dependent on its binding to phosphatidylinositol 3-phosphate (PtdIns(3)P). During autophagy acts as a regulatory subunit of the alternative PI3K complex II (PI3KC3-C2) that mediates formation of phosphatidylinositol 3-phosphate and is believed to be involved in maturation of autophagosomes and endocytosis. Activates lipid kinase activity of PIK3C3. Involved in the regulation of degradative endocytic trafficking and cytokinesis, and in regulation of ATG9A transport from the Golgi to the autophagosome; the functions seems to implicate its association with PI3KC3-C2. Involved in maturation of autophagosomes and degradative endocytic trafficking independently of BECN1 but depending on its association with a class C Vps complex (possibly the HOPS complex); the association is also proposed to promote autophagosome recruitment and activation of Rab7 and endosome-endosome fusion events. Enhances class C Vps complex (possibly HOPS complex) association with a SNARE complex and promotes fusogenic SNARE complex formation during late endocytic membrane fusion. In case of negative-strand RNA virus infection is required for efficient virus entry, promotes endocytic transport of virions and is implicated in a VAMP8-specific fusogenic SNARE complex assembly. Functionally, involved in maintaining chromosomal stability. Promotes DNA double-strand break (DSB) repair by association with DNA-dependent protein kinase complex DNA-PK and activating it in non-homologous end joining (NHEJ). Required for centrosome stability and proper chromosome segregation. This chain is UV radiation resistance-associated gene protein (UVRAG), found in Homo sapiens (Human).